Here is a 53-residue protein sequence, read N- to C-terminus: MRVIRMTNYEAGTLLTCSHEGCGCRVRIEVPCHCAGAGDAYRCTCGDELAPVK.

The propeptide occupies 1-6 (MRVIRM). Positions 17, 19, 22, 24, 32, 33, 34, 43, and 45 each coordinate Cu(+).

Belongs to the metallothionein superfamily.

Functionally, metallothioneins are small proteins that have a high content of cysteine residues which allow them to bind heavy metal ions through clusters of thiolate bonds. MymT binds up to seven ions of Cu(+), with a preference for four to six Cu(+) ions, in a solvent-shielded core. MymT protects M.tuberculosis from copper toxicity. The protein is Metallothionein (mymT) of Mycobacterium tuberculosis (strain CDC 1551 / Oshkosh).